The following is a 154-amino-acid chain: Protein-export protein SecB (154 aa).

Belongs to the SecB family. As to quaternary structure, homotetramer, a dimer of dimers. One homotetramer interacts with 1 SecA dimer.

The protein localises to the cytoplasm. In terms of biological role, one of the proteins required for the normal export of preproteins out of the cell cytoplasm. It is a molecular chaperone that binds to a subset of precursor proteins, maintaining them in a translocation-competent state. It also specifically binds to its receptor SecA. The chain is Protein-export protein SecB from Buchnera aphidicola subsp. Schizaphis graminum (strain Sg).